A 413-amino-acid chain; its full sequence is MQRSKLKEVRGTKDLLGAEFYKFQYIQHLSQAIANRYGFIAVDTPIIEFTEVFTKTLGDDSDIVTKEMYNFQDKSGENITLRPEFTSAIVRLLINKNLVTPVKLFSSGPVFRYERPQKCRQRQFHQVNFEFFGSDSPLADVEMIALGYNILSELKLLNNITLEINFLGDKETMNSYRLSLVEYLNKYKKDLSGDSQRRLITNPLRVLDSKSPEDCEILLNAPNIGDFYTKYSSDFFTEVLDGLNDLCIPYQLNNRIVRGLDYYCNTVFEFTTSELGSQNAVIAGGRYDGLVRSMGGNDTPAVGFAMGIERVSALIDYEHKESRNVVLVPIGKDAMSYALKLAYELRCKGISVGWNYKNTGLKNMLRKINDNSIVLIFGDEELKSNTVQVKDMKTGEQQEVEKGNLLDALYNKI.

This sequence belongs to the class-II aminoacyl-tRNA synthetase family. Homodimer.

It localises to the cytoplasm. The catalysed reaction is tRNA(His) + L-histidine + ATP = L-histidyl-tRNA(His) + AMP + diphosphate + H(+). The polypeptide is Histidine--tRNA ligase (Ehrlichia canis (strain Jake)).